An 82-amino-acid chain; its full sequence is Large ribosomal subunit protein bL31B (82 aa).

It belongs to the bacterial ribosomal protein bL31 family. Type B subfamily. In terms of assembly, part of the 50S ribosomal subunit.

The sequence is that of Large ribosomal subunit protein bL31B from Pectobacterium atrosepticum (strain SCRI 1043 / ATCC BAA-672) (Erwinia carotovora subsp. atroseptica).